A 307-amino-acid polypeptide reads, in one-letter code: Small ribosomal subunit protein uS5m (307 aa).

A mitochondrion-targeting transit peptide spans 1 to 13; the sequence is MFKRQLSTSVRYL. The region spanning 144–208 is the S5 DRBM domain; that stretch reads LTMKPLVMKR…WDAVRNLKEI (65 aa).

The protein belongs to the universal ribosomal protein uS5 family. In terms of assembly, component of the mitochondrial small ribosomal subunit (mt-SSU). Mature yeast 74S mitochondrial ribosomes consist of a small (37S) and a large (54S) subunit. The 37S small subunit contains a 15S ribosomal RNA (15S mt-rRNA) and 34 different proteins. The 54S large subunit contains a 21S rRNA (21S mt-rRNA) and 46 different proteins. uS3m, uS4m and uS5m form the narrow entry site of the mRNA channel.

The protein localises to the mitochondrion. Component of the mitochondrial ribosome (mitoribosome), a dedicated translation machinery responsible for the synthesis of mitochondrial genome-encoded proteins, including at least some of the essential transmembrane subunits of the mitochondrial respiratory chain. The mitoribosomes are attached to the mitochondrial inner membrane and translation products are cotranslationally integrated into the membrane. The polypeptide is Small ribosomal subunit protein uS5m (MRPS5) (Saccharomyces cerevisiae (strain ATCC 204508 / S288c) (Baker's yeast)).